A 535-amino-acid chain; its full sequence is CTP synthase (535 aa).

An amidoligase domain region spans residues 1–267; the sequence is MTKYIFVTGG…DQIVCDHLKL (267 aa). Ser13 is a binding site for CTP. Ser13 is a binding site for UTP. 14-19 lines the ATP pocket; the sequence is SLGKGI. Tyr54 contacts L-glutamine. An ATP-binding site is contributed by Asp71. Mg(2+) is bound by residues Asp71 and Glu141. Residues 148–150, 188–193, and Lys224 each bind CTP; these read DIE and KTKPTQ. UTP is bound by residues 188–193 and Lys224; that span reads KTKPTQ. The Glutamine amidotransferase type-1 domain maps to 292–534; it reads RIALVGKYVE…VQASITNKES (243 aa). Gly354 contributes to the L-glutamine binding site. The active-site Nucleophile; for glutamine hydrolysis is Cys381. Residues 382–385, Glu405, and Arg462 contribute to the L-glutamine site; that span reads LGMQ. Residues His507 and Glu509 contribute to the active site.

This sequence belongs to the CTP synthase family. Homotetramer.

It catalyses the reaction UTP + L-glutamine + ATP + H2O = CTP + L-glutamate + ADP + phosphate + 2 H(+). The enzyme catalyses L-glutamine + H2O = L-glutamate + NH4(+). It carries out the reaction UTP + NH4(+) + ATP = CTP + ADP + phosphate + 2 H(+). The protein operates within pyrimidine metabolism; CTP biosynthesis via de novo pathway; CTP from UDP: step 2/2. Its activity is regulated as follows. Allosterically activated by GTP, when glutamine is the substrate; GTP has no effect on the reaction when ammonia is the substrate. The allosteric effector GTP functions by stabilizing the protein conformation that binds the tetrahedral intermediate(s) formed during glutamine hydrolysis. Inhibited by the product CTP, via allosteric rather than competitive inhibition. Its function is as follows. Catalyzes the ATP-dependent amination of UTP to CTP with either L-glutamine or ammonia as the source of nitrogen. Regulates intracellular CTP levels through interactions with the four ribonucleotide triphosphates. The chain is CTP synthase from Bacillus cytotoxicus (strain DSM 22905 / CIP 110041 / 391-98 / NVH 391-98).